The following is a 1450-amino-acid chain: DNA-directed RNA polymerase RPB1 homolog (1450 aa).

This sequence belongs to the RNA polymerase beta' chain family. In terms of assembly, part of the viral DNA-directed RNA polymerase that consists of 8 polII-like subunits (RPB1, RPB2, RPB3, RPB5, RPB6, RPB7, RPB9, RPB10), a capping enzyme and a termination factor.

The protein resides in the virion. The catalysed reaction is RNA(n) + a ribonucleoside 5'-triphosphate = RNA(n+1) + diphosphate. Catalytic component of the DNA-directed RNA polymerase (RNAP) that catalyzes the transcription in the cytoplasm of viral DNA into RNA using the four ribonucleoside triphosphates as substrates. Forms the polymerase active center together with RPB2. Part of the core element with the central large cleft, the clamp element that moves to open and close the cleft and the jaws that are thought to grab the incoming DNA template. The polypeptide is DNA-directed RNA polymerase RPB1 homolog (African swine fever virus (strain Badajoz 1971 Vero-adapted) (Ba71V)).